The primary structure comprises 470 residues: Leucine-rich repeat extensin-like protein 6 (470 aa).

An N-terminal signal peptide occupies residues 1–28; the sequence is MREDTFFFQWWFLVSGLSFIFLLPQAFT. N83 carries an N-linked (GlcNAc...) asparagine glycan. LRR repeat units follow at residues 98–122, 123–146, 147–170, 171–194, 196–217, 219–241, 243–265, 266–290, 291–314, and 316–337; these read VLTV…LGLL, TDLA…LKCL, HLLH…IFSL, PSLK…LFDL, LDAL…IGNS, VSVL…FYKM, KTLH…EIGL, LNQL…IGDM, KSLE…ICRL, and RLEN…CLRL. An N-linked (GlcNAc...) asparagine glycan is attached at N319. The disordered stretch occupies residues 378–411; the sequence is SPPPPPPPPPPPPPPPPPPPPPPPPPPPPPYVYP. Residues 378-470 are contains the Ser-Pro(4) repeats; that stretch reads SPPPPPPPPP…CNDLPTPVHY (93 aa).

In terms of processing, hydroxylated on proline residues in the S-P-P-P-P repeat. O-glycosylated on hydroxyprolines. As to expression, expressed in roots.

It localises to the secreted. Its subcellular location is the cell wall. In terms of biological role, modulates cell morphogenesis by regulating cell wall formation and assembly, and/or growth polarization. This is Leucine-rich repeat extensin-like protein 6 (LRX6) from Arabidopsis thaliana (Mouse-ear cress).